We begin with the raw amino-acid sequence, 170 residues long: Tubulin polymerization-promoting protein family member 2 (170 aa).

The interval 127-147 is disordered; sequence TGTHKERFDESGKGKGIAGRE. Basic and acidic residues predominate over residues 129–139; sequence THKERFDESGK.

The protein belongs to the TPPP family.

It localises to the cytoplasm. Its subcellular location is the cytosol. The protein resides in the cell projection. It is found in the cilium. The protein localises to the flagellum. Its function is as follows. Probable regulator of microtubule dynamics required for sperm motility. In contrast to other members of the family, has no microtubule bundling activity. The chain is Tubulin polymerization-promoting protein family member 2 (TPPP2) from Macaca fascicularis (Crab-eating macaque).